We begin with the raw amino-acid sequence, 256 residues long: Protein FixA (256 aa).

Belongs to the ETF beta-subunit/FixA family. Heterodimer of FixA and FixB.

It functions in the pathway amine and polyamine metabolism; carnitine metabolism. In terms of biological role, required for anaerobic carnitine reduction. May bring reductant to CaiA. The polypeptide is Protein FixA (Escherichia coli O81 (strain ED1a)).